A 221-amino-acid chain; its full sequence is Ethylene-inducing xylanase 4 (221 aa).

The signal sequence occupies residues Met1–Gly19. Residues Asn28–Glu218 enclose the GH11 domain. The N-linked (GlcNAc...) asparagine glycan is linked to Asn96. Catalysis depends on Glu114, which acts as the Nucleophile. Glu205 acts as the Proton donor in catalysis.

The protein belongs to the glycosyl hydrolase 11 (cellulase G) family.

The catalysed reaction is Endohydrolysis of (1-&gt;4)-beta-D-xylosidic linkages in xylans.. It participates in glycan degradation; xylan degradation. Endo-1,4-beta-xylanase involved in the hydrolysis of xylan, a major structural heterogeneous polysaccharide found in plant biomass representing the second most abundant polysaccharide in the biosphere, after cellulose. May act as an elicitor of plant defense responses in certain plants but does not exhibit any cell death when transiently expressed in N.benthamiana. This chain is Ethylene-inducing xylanase 4, found in Verticillium dahliae (strain VdLs.17 / ATCC MYA-4575 / FGSC 10137) (Verticillium wilt).